The following is a 213-amino-acid chain: Ras-related protein Rab-39B (213 aa).

Residues S17, G20, K21, S22, C23, S37, and T40 each coordinate GTP. A Mg(2+)-binding site is contributed by S22. The segment at 35–43 (QVSDPTVGV) is switch-I. 2 residues coordinate Mg(2+): T40 and D64. Residues G67, H123, K124, D126, A154, and R155 each coordinate GTP. Positions 67-83 (GQERFRSITRAYYRNSV) are switch-II. The residue at position 201 (S201) is a Phosphoserine. Residues C211 and C213 are each lipidated (S-geranylgeranyl cysteine). Position 213 is a cysteine methyl ester (C213).

The protein belongs to the small GTPase superfamily. Rab family. Interacts (GDP-bound) with C9orf72; C9orf72 in complex with SMCR8 acts as a GEF for RAB39B. Interacts (in GTP-bound form) with PICK1 (via PDZ domain); a PICK1 homodimer may allow simultaneous association of RAB39B and GRIA2 to PICK1 which is involved in GRIA2 trafficking. Interacts with isoform c of RASSF1; the interaction is strong. Interacts with isoform a of RASSF1; the interaction is weak. Interacts with the DLG4/PSD-95. Interacts (GTP-bound) with HOPS complex components VPS39 and VPS41. Mg(2+) is required as a cofactor. In terms of tissue distribution, highly expressed in the brain.

The protein resides in the cell membrane. It is found in the cytoplasmic vesicle membrane. Its subcellular location is the golgi apparatus. The protein localises to the cytoplasmic vesicle. It localises to the autophagosome membrane. The protein resides in the autolysosome membrane. The enzyme catalyses GTP + H2O = GDP + phosphate + H(+). Its activity is regulated as follows. Regulated by guanine nucleotide exchange factors (GEFs) including C9orf72-SMCR8 complex, which promote the exchange of bound GDP for free GTP. Regulated by GTPase activating proteins (GAPs) which increase the GTP hydrolysis activity. Inhibited by GDP dissociation inhibitors (GDIs). The small GTPases Rab are key regulators of intracellular membrane trafficking, from the formation of transport vesicles to their fusion with membranes. Rabs cycle between an inactive GDP-bound form and an active GTP-bound form that is able to recruit to membranes different sets of downstream effectors directly responsible for vesicle formation, movement, tethering and fusion. RAB39B is involved in autophagy and may function in autophagosome formation. Binds downstream effector PICK1 to ensure selectively GRIA2 exit from the endoplasmic reticulum to the Golgi and to regulate AMPAR composition at the post-synapses and thus synaptic transmission. May regulate the homeostasis of SNCA/alpha-synuclein. The protein is Ras-related protein Rab-39B of Homo sapiens (Human).